The chain runs to 2850 residues: Hornerin (2850 aa).

The tract at residues 1 to 81 (MPKLLQGVIT…TEYLLMIFKL (81 aa)) is S-100-like. 2 EF-hand domains span residues 13–48 (DVFYQYATQHGEYDTLNKAELKELLENEFHQILKNP) and 49–84 (NDPDTVDIILQSLDRDHNKKVDFTEYLLMIFKLVQA). 7 residues coordinate Ca(2+): Thr27, Glu32, Asp62, Asp64, Asn66, Lys68, and Glu73. Repeat copies occupy residues 97-187 (SGSK…SDSH), 188-278 (QSSG…SSSG), 279-369 (SSSS…SGSG), 370-460 (HSSS…SGSG), 474-566 (HSSG…YGSG), 593-683 (QSSG…SGSG), 685-747 (SSSN…SSSG), 748-836 (LSSS…SASG), 839-875 (SSQGRHGSTSGQSSSSGQHDSSSGQSSSYGQHESASH), 876-965 (HASG…SRSG), 966-1004 (QSSRSEQHGSSSGSSSSYGQHGSGSRQSLGHGQHGSGSG), 1007-1097 (PSPS…ASSG), and 1098-1188 (QSSS…SGSG). A compositionally biased stretch (basic and acidic residues) spans 100–110 (KLRDDTHQHQE). 2 disordered regions span residues 100 to 154 (KLRD…GTES) and 166 to 2817 (SGQH…KGGS). Polar residues predominate over residues 125–144 (SSFSHSSWSAGENDSYSRNV). Low complexity-rich tracts occupy residues 167 to 192 (GQHNSYSGQSSSYGEQNSDSHQSSGR) and 226 to 248 (GQSSGFSQHKSSSGQSSGYSQHG). Positions 249–259 (SGSGHSSGYGQ) are enriched in gly residues. Composition is skewed to low complexity over residues 276–308 (SSGSSSSYGQHGSGSRQSLGHGRQGSGSRQSPS) and 317–421 (GHSS…SGSG). Residues 422 to 433 (QSPGHGQRGSGS) are compositionally biased toward gly residues. 2 stretches are compositionally biased toward low complexity: residues 449–465 (SSSSGPYVSGSGYSSGF) and 473–482 (EHSSGYTQHG). A compositionally biased stretch (gly residues) spans 483-493 (SGSGHSSGHGQ). Composition is skewed to low complexity over residues 494 to 529 (HGSRSGQSSRGERQGSSAGSSSSYGQHGSGSRQSLG), 555 to 661 (SSSY…QSPS), 670 to 724 (GHSS…SHSS), 732 to 765 (RSGQSSRSEQHGSSSGLSSSYGQHGSGSHQSSGH), 782 to 806 (GSSSGHSSSHGQHGSGTSCSSSCGH), and 818 to 871 (GQHE…GQHE). A phosphoserine mark is found at Ser659 and Ser661. Positions 884–900 (GSGSGQSPGHGQRGSGS) are enriched in gly residues. Ser890 carries the phosphoserine modification. 2 stretches are compositionally biased toward low complexity: residues 901–921 (GQSPSYGRHGSGSGRSSSSGR) and 931–996 (GFGH…SLGH). 2 positions are modified to phosphoserine: Ser993 and Ser1008. Composition is skewed to low complexity over residues 1019 to 1050 (GQSSSYGPYRSGSGWSSSRGPYESGSGHSSGL) and 1057 to 1115 (SGQS…SSGY). Over residues 1116 to 1132 (GRQGSGSGQSPGHGQRG) the composition is skewed to gly residues. 2 stretches are compositionally biased toward low complexity: residues 1133 to 1156 (SGSRQSPSYGRHGSGSGRSSSSGQ) and 1166 to 1184 (GFGHHESSSGQSSSYSQHG). The span at 1185 to 1195 (SGSGHSSGYGQ) shows a compositional bias: gly residues. At Arg1205 the chain carries Omega-N-methylarginine. 2 stretches are compositionally biased toward low complexity: residues 1211–1232 (SSSGSSSHYGQHGSGSRQSSGH) and 1253–1276 (GHSSSHGQHGSGSGRSSSRGPYES). Repeat 14 spans residues 1215 to 1305 (SSSHYGQHGS…AYSQHGSGSG (91 aa)). The segment covering 1280-1301 (HSSVFGQHESGSGHSSAYSQHG) has biased composition (polar residues). Composition is skewed to low complexity over residues 1309-1322 (SQGQHGSTSGQSST), 1331-1349 (GQSSSYGHRGSGSSQSSGY), 1370-1390 (GHSSSYGQHGSGSGWSSSSGR), 1400-1438 (GFGHHESSSWQSSGCTQHGSGSGHSSSYEQHGSRSGQSS), and 1445-1466 (SSSGSSSSYGQHGSGSRQSLGH). 16 repeat units span residues 1332 to 1422 (QSSS…SGSG), 1423 to 1474 (HSSS…SGSG), 1477 to 1567 (PSPS…ASSG), 1568 to 1658 (QSSS…SGSG), 1685 to 1775 (SSSR…SGSG), 1802 to 1892 (QSSS…SGSG), 1893 to 1944 (HSSS…SGSG), 1947 to 2037 (PSPS…ASSG), 2038 to 2128 (QSSS…SGSG), 2155 to 2245 (SSSR…SGSG), 2272 to 2362 (QSSS…SGSG), 2363 to 2414 (HSSS…SGSG), 2417 to 2507 (PSPS…ASSG), 2508 to 2598 (QSSS…SGSG), 2625 to 2715 (SSSH…SGSG), and 2716 to 2806 (HFCS…SGSG). Phosphoserine occurs at positions 1463 and 1478. Composition is skewed to low complexity over residues 1489–1520 (GQSSSYSPYGSGSGWSSSRGPYESGSSHSSGL) and 1527–1585 (SGQS…SSGY). The span at 1586–1602 (GRQGSGSGQSPGHGQRG) shows a compositional bias: gly residues. Low complexity-rich tracts occupy residues 1603–1626 (SGSRQSPSYGRHGSGSGRSSSSGQ) and 1636–1654 (GFGHHESSSGQSSSYSQHG). The span at 1655–1665 (SGSGHSSGYGQ) shows a compositional bias: gly residues. Positions 1682–1702 (SSRSSSRYGQHGSGSRQSSGH) are enriched in low complexity. A phosphoserine mark is found at Ser1712 and Ser1714. Residues 1723 to 1746 (GHSSSHGQHGSGSGRSSSRGPYES) are compositionally biased toward low complexity. Positions 1750 to 1771 (HSSVFGQHESGSGHSSAYSQHG) are enriched in polar residues. Low complexity-rich tracts occupy residues 1779-1831 (SQGQ…QSPS), 1840-1860 (GHSSSYGQHGSGSGWSSSSGR), and 1870-1936 (GFGH…SLGH). 2 positions are modified to phosphoserine: Ser1829 and Ser1831. Residues Ser1933 and Ser1948 each carry the phosphoserine modification. Composition is skewed to low complexity over residues 1959-1990 (GQSSSYGPYGSGSGWSSSRGPYESGSGHSSGL) and 1997-2055 (SGQS…SSGY). The segment covering 2056–2072 (GRQGSGSGQSPGHGQRG) has biased composition (gly residues). Low complexity-rich tracts occupy residues 2073-2096 (SGSRQSPSYGRHGSGSGRSSSSGQ) and 2106-2124 (GFGHHESSSGQSSSYSQHG). Gly residues predominate over residues 2125 to 2135 (SGSGHSSGYGQ). Composition is skewed to low complexity over residues 2151–2172 (SSSGSSSRYGQHGSGSRQSSGH) and 2193–2216 (GHSSSHGQHGSGSGRSSSRGPYES). Polar residues predominate over residues 2220 to 2241 (HSSVFGQHESGSGHSSAYSQHG). 4 stretches are compositionally biased toward low complexity: residues 2249–2301 (SQGQ…QSPS), 2310–2330 (GHSSSYGQHGSGSGWSSSSGR), 2340–2378 (GFGHHESSSWQSSGYTQHGSGSGHSSSYEQHGSRSGQSS), and 2385–2406 (SSSGSSSSYGQHGSGSRQSLGH). Phosphoserine is present on residues Ser2299 and Ser2301. Phosphoserine occurs at positions 2403 and 2418. Composition is skewed to low complexity over residues 2429–2460 (GQSSSYSPYGSGSGWSSSRGPYESGSGHSSGL) and 2467–2525 (SGQS…SSGY). A compositionally biased stretch (gly residues) spans 2526–2542 (GRQGSGSGQSPGHGQRG). 2 stretches are compositionally biased toward low complexity: residues 2543 to 2566 (SGSRQSPSYGRHGSGSGRSSSSGQ) and 2576 to 2594 (GFGHHESSSGQSSSYSQHG). A compositionally biased stretch (gly residues) spans 2595–2605 (SGSGHSSGYGQ). The segment covering 2621–2642 (SSSGSSSHYGQHGSGSRQSSGH) has biased composition (low complexity). Phosphoserine is present on residues Ser2652 and Ser2654. The span at 2663–2682 (GHSSSHGQHGSGSGRSSSRG) shows a compositional bias: low complexity. The segment covering 2698–2711 (ESGSGHSSAYSQHG) has biased composition (polar residues). Composition is skewed to low complexity over residues 2719-2732 (SQGQHGSTSGQSST), 2741-2759 (GQSSSYGHRGSGSSQSSGY), and 2795-2816 (SSGYSQHGSGSGQDGYSYCKGG).

It belongs to the S100-fused protein family. In the N-terminal section; belongs to the S-100 family. Processed during the process of epidermal differentiation. In terms of processing, forms covalent cross-links mediated by transglutaminase TGM3, between glutamine and the epsilon-amino group of lysine residues (in vitro). As to expression, expressed in cornified epidermis, psoriatic and regenerating skin after wounding. Found in the upper granular layer and in the entire cornified layer of epidermis.

Its subcellular location is the cytoplasmic granule. Its function is as follows. Component of the epidermal cornified cell envelopes. The chain is Hornerin (HRNR) from Homo sapiens (Human).